The chain runs to 153 residues: SsrA-binding protein (153 aa).

The protein belongs to the SmpB family.

It localises to the cytoplasm. In terms of biological role, required for rescue of stalled ribosomes mediated by trans-translation. Binds to transfer-messenger RNA (tmRNA), required for stable association of tmRNA with ribosomes. tmRNA and SmpB together mimic tRNA shape, replacing the anticodon stem-loop with SmpB. tmRNA is encoded by the ssrA gene; the 2 termini fold to resemble tRNA(Ala) and it encodes a 'tag peptide', a short internal open reading frame. During trans-translation Ala-aminoacylated tmRNA acts like a tRNA, entering the A-site of stalled ribosomes, displacing the stalled mRNA. The ribosome then switches to translate the ORF on the tmRNA; the nascent peptide is terminated with the 'tag peptide' encoded by the tmRNA and targeted for degradation. The ribosome is freed to recommence translation, which seems to be the essential function of trans-translation. This is SsrA-binding protein from Orientia tsutsugamushi (strain Ikeda) (Rickettsia tsutsugamushi).